Reading from the N-terminus, the 1007-residue chain is Mediator of RNA polymerase II transcription subunit 5 (1007 aa).

This sequence belongs to the Mediator complex subunit 5 family. As to quaternary structure, component of the Mediator complex.

Its subcellular location is the nucleus. Functionally, component of the Mediator complex, a coactivator involved in the regulated transcription of nearly all RNA polymerase II-dependent genes. Mediator functions as a bridge to convey information from gene-specific regulatory proteins to the basal RNA polymerase II transcription machinery. Mediator is recruited to promoters by direct interactions with regulatory proteins and serves as a scaffold for the assembly of a functional preinitiation complex with RNA polymerase II and the general transcription factors. The sequence is that of Mediator of RNA polymerase II transcription subunit 5 (nut1) from Aspergillus fumigatus (strain ATCC MYA-4609 / CBS 101355 / FGSC A1100 / Af293) (Neosartorya fumigata).